Here is a 269-residue protein sequence, read N- to C-terminus: Tryptophan synthase alpha chain (269 aa).

Residues Glu49 and Asp60 each act as proton acceptor in the active site.

The protein belongs to the TrpA family. Tetramer of two alpha and two beta chains.

The catalysed reaction is (1S,2R)-1-C-(indol-3-yl)glycerol 3-phosphate + L-serine = D-glyceraldehyde 3-phosphate + L-tryptophan + H2O. The protein operates within amino-acid biosynthesis; L-tryptophan biosynthesis; L-tryptophan from chorismate: step 5/5. Functionally, the alpha subunit is responsible for the aldol cleavage of indoleglycerol phosphate to indole and glyceraldehyde 3-phosphate. The polypeptide is Tryptophan synthase alpha chain (Buchnera aphidicola subsp. Schlechtendalia chinensis).